Consider the following 327-residue polypeptide: Protein UL95 homolog (327 aa).

The protein belongs to the herpesviridae UL95 family. In terms of assembly, interacts with ORF24; this interaction may serve as a core scaffold for the assembly of the viral transcription initiation complex. Interacts with ORF66. Interacts with ORF18. Interacts with ORF23. Interacts with ORF31. Interacts with host EPAS1; this interaction stabilizes host EPAS1, ensuring its transcriptional activity.

The protein resides in the host nucleus. In terms of biological role, participates in the expression of late viral mRNAs in part by interacting with ORF24. Expressed before viral DNA replication, assembles at the viral pre-replication complexes (pre-RCs) and thus serves as a hub for recruiting a viral transcription complex to ORF24 to promote late viral gene expression. Also plays a regulatory role in the viral life cycle by regulating host transcriptional regulators HIF1A and EPAS1. The sequence is that of Protein UL95 homolog (ORF34) from Homo sapiens (Human).